A 297-amino-acid polypeptide reads, in one-letter code: Acetaldehyde dehydrogenase (297 aa).

C128 functions as the Acyl-thioester intermediate in the catalytic mechanism. NAD(+) contacts are provided by residues 159 to 167 and N272; that span reads SAGPGTRQN.

The protein belongs to the acetaldehyde dehydrogenase family.

It carries out the reaction acetaldehyde + NAD(+) + CoA = acetyl-CoA + NADH + H(+). The chain is Acetaldehyde dehydrogenase from Desulfitobacterium hafniense (strain DSM 10664 / DCB-2).